Reading from the N-terminus, the 115-residue chain is UPF0295 protein BLi00901/BL05075 (115 aa).

2 helical membrane-spanning segments follow: residues 18 to 38 (LVFI…SVLL) and 41 to 61 (VFMI…FWIG).

Belongs to the UPF0295 family.

The protein resides in the cell membrane. The sequence is that of UPF0295 protein BLi00901/BL05075 from Bacillus licheniformis (strain ATCC 14580 / DSM 13 / JCM 2505 / CCUG 7422 / NBRC 12200 / NCIMB 9375 / NCTC 10341 / NRRL NRS-1264 / Gibson 46).